Consider the following 469-residue polypeptide: COP9 signalosome complex subunit 5 (469 aa).

One can recognise an MPN domain in the interval 63–200 (TYISSLALCK…IGAFRTFPDN (138 aa)). Residues His-146, His-148, and Asp-159 each contribute to the Zn(2+) site. Positions 146-159 (HSHPGYGCWLSGID) match the JAMM motif motif. Disordered stretches follow at residues 201-220 (YKSPDSAAPTNNTRGVPPSK) and 331-404 (YDSF…KRPM). Positions 344 to 353 (DEMDDESDLD) are enriched in acidic residues.

The protein belongs to the peptidase M67A family. CSN5 subfamily. As to quaternary structure, component of the COP9 signalosome (CSN) complex.

Its subcellular location is the cytoplasm. It is found in the nucleus. Functionally, catalytic Component of the COP9 signalosome (CSN) complex that acts as an regulator of the ubiquitin (Ubl) conjugation pathway by mediating the deneddylation of the cullin subunit of SCF-type E3 ubiquitin-protein ligase complexes. The CSN complex is involved in the regulation of the mating pheromone response. The polypeptide is COP9 signalosome complex subunit 5 (RRI1) (Debaryomyces hansenii (strain ATCC 36239 / CBS 767 / BCRC 21394 / JCM 1990 / NBRC 0083 / IGC 2968) (Yeast)).